We begin with the raw amino-acid sequence, 252 residues long: Thiamine thiazole synthase (252 aa).

NAD(+) is bound by residues Ser-35, Glu-54–Lys-55, Gly-62, Val-126, and His-152–Asp-154. Fe cation contacts are provided by Asp-154 and His-169. Position 217 (Met-217) interacts with NAD(+). Position 227 (Arg-227) interacts with glycine.

Belongs to the THI4 family. As to quaternary structure, homooctamer; tetramer of dimers. Fe(2+) serves as cofactor.

It carries out the reaction hydrogen sulfide + glycine + NAD(+) = ADP-5-ethyl-4-methylthiazole-2-carboxylate + nicotinamide + 3 H2O + H(+). The protein operates within cofactor biosynthesis; thiamine diphosphate biosynthesis. In terms of biological role, involved in the biosynthesis of the thiazole moiety of thiamine. Catalyzes the conversion of NAD and glycine to adenosine diphosphate 5-(2-hydroxyethyl)-4-methylthiazole-2-carboxylate (ADT), an adenylated thiazole intermediate, using free sulfide as a source of sulfur. The polypeptide is Thiamine thiazole synthase (Pyrococcus horikoshii (strain ATCC 700860 / DSM 12428 / JCM 9974 / NBRC 100139 / OT-3)).